The chain runs to 338 residues: tRNA-specific 2-thiouridylase MnmA (338 aa).

ATP contacts are provided by residues 6–13 (AMSGGVDS) and Met32. Cys92 serves as the catalytic Nucleophile. Cys92 and Cys186 are disulfide-bonded. Gly116 contacts ATP. Residues 134-136 (KDQ) form an interaction with tRNA region. Catalysis depends on Cys186, which acts as the Cysteine persulfide intermediate. The interaction with tRNA stretch occupies residues 288 to 289 (RY).

The protein belongs to the MnmA/TRMU family.

It localises to the cytoplasm. It catalyses the reaction S-sulfanyl-L-cysteinyl-[protein] + uridine(34) in tRNA + AH2 + ATP = 2-thiouridine(34) in tRNA + L-cysteinyl-[protein] + A + AMP + diphosphate + H(+). Catalyzes the 2-thiolation of uridine at the wobble position (U34) of tRNA, leading to the formation of s(2)U34. The polypeptide is tRNA-specific 2-thiouridylase MnmA (Campylobacter jejuni subsp. jejuni serotype O:6 (strain 81116 / NCTC 11828)).